The sequence spans 262 residues: 3-deoxy-manno-octulosonate cytidylyltransferase (262 aa).

It belongs to the KdsB family.

The protein resides in the cytoplasm. The enzyme catalyses 3-deoxy-alpha-D-manno-oct-2-ulosonate + CTP = CMP-3-deoxy-beta-D-manno-octulosonate + diphosphate. It functions in the pathway nucleotide-sugar biosynthesis; CMP-3-deoxy-D-manno-octulosonate biosynthesis; CMP-3-deoxy-D-manno-octulosonate from 3-deoxy-D-manno-octulosonate and CTP: step 1/1. It participates in bacterial outer membrane biogenesis; lipopolysaccharide biosynthesis. Functionally, activates KDO (a required 8-carbon sugar) for incorporation into bacterial lipopolysaccharide in Gram-negative bacteria. This Acidovorax sp. (strain JS42) protein is 3-deoxy-manno-octulosonate cytidylyltransferase.